We begin with the raw amino-acid sequence, 237 residues long: Carbonyl reductase family member 4 (237 aa).

NADP(+) contacts are provided by residues 11 to 14 (SRGI), 34 to 35 (RN), Asp57, and 84 to 86 (AAG). Ser135 contacts substrate. NADP(+)-binding positions include Tyr148, Lys152, and 181 to 183 (IHT). Catalysis depends on Tyr148, which acts as the Proton acceptor.

The protein belongs to the short-chain dehydrogenases/reductases (SDR) family. Homotetramer (in vitro). Heterotetramer with HSD17B8; contains two molecules each of HSD17B8 and CBR4.

It localises to the mitochondrion matrix. It functions in the pathway lipid metabolism; fatty acid biosynthesis. The heterotetramer with HSD17B8 has NADH-dependent 3-ketoacyl-acyl carrier protein reductase activity, and thereby plays a role in mitochondrial fatty acid biosynthesis. Within the heterotetramer, HSD17B8 binds NADH; CBR4 binds NADPD. The homotetramer has NADPH-dependent quinone reductase activity. Both homotetramer and the heterotetramer have broad in vitro substrate specificity and can reduce 9,10-phenanthrenequinone, 1,4-benzoquinone and various other o-quinones and p-quinones. The polypeptide is Carbonyl reductase family member 4 (cbr4) (Danio rerio (Zebrafish)).